Consider the following 143-residue polypeptide: Transmembrane protein 80 (143 aa).

A run of 4 helical transmembrane segments spans residues 22 to 42 (LLCLSGTYYALYFLATLLLLV), 47 to 67 (VFTYPHSCLVLDLTLLFLMGI), 88 to 108 (LAASLVLTVGSALLSAYFLLW), and 122 to 142 (PLLALHGLEAVLQVVAIAAFV).

It localises to the membrane. The protein localises to the cell projection. The protein resides in the cilium. The protein is Transmembrane protein 80 (TMEM80) of Bos taurus (Bovine).